The following is a 260-amino-acid chain: RNA replication protein (260 aa).

One can recognise a RdRp catalytic domain in the interval 40-147 (GICTESDYEA…SERLCIKKEH (108 aa)).

It belongs to the potexviruses/carlaviruses RNA replication protein family.

The catalysed reaction is RNA(n) + a ribonucleoside 5'-triphosphate = RNA(n+1) + diphosphate. It catalyses the reaction ATP + H2O = ADP + phosphate + H(+). Functionally, RNA replication. The central part of this protein possibly functions as an ATP-binding helicase. The chain is RNA replication protein from Chrysanthemum morifolium (Florist's daisy).